The primary structure comprises 194 residues: MLTPHKIINLQNHFLIAMPALQDPLFKQSVVYICEHNDAGAMGIVINKLVTRCTVETILNNLKIVSPTRDPSVRLDNPVFAGGPLLDDRGFILHTPIKGFGSSVNISSKAMITTSKDILETLGTPNQPKDVLVALGYSGWDKGQLEHELMENTWLTAPANETILFHTPIIDRWRAAAKILGIDIYNIADQTGHA.

Belongs to the UPF0301 (AlgH) family.

The sequence is that of UPF0301 protein BPEN_258 from Blochmanniella pennsylvanica (strain BPEN).